An 898-amino-acid chain; its full sequence is Pyruvate, phosphate dikinase (898 aa).

Residues 1–355 form an N-terminal region; it reads MAKWVYTFGA…LWMLQTRSGK (355 aa). Arg-96 lines the ATP pocket. A linker 1 region spans residues 356 to 412; that stretch reads RTAKSALKIAVDMAEEGLISKEEAVARIDPASLDQLLHPTIDPHARRDIIGSGLPAS. Residues 413–511 form a central region; the sequence is PGAATGEIVF…TLRKGDVITI (99 aa). Phosphothreonine; by PDRP1 is present on Thr-466. His-468 (tele-phosphohistidine intermediate) is an active-site residue. The linker 2 stretch occupies residues 512 to 546; sequence DGSSGQVLKGEIPMLQPELSGDFGKIMQWADASRR. The tract at residues 547–898 is C-terminal; it reads MTVRTNAETP…VAEVQALAAS (352 aa). Residues Arg-574, Arg-630, Glu-758, Gly-779, Thr-780, Asn-781, and Asp-782 each coordinate substrate. Glu-758 provides a ligand contact to Mg(2+). Residue Asp-782 coordinates Mg(2+). Catalysis depends on Cys-844, which acts as the Proton donor.

The protein belongs to the PEP-utilizing enzyme family. Homodimer. The cofactor is Mg(2+). Phosphorylation of Thr-466 in the dark inactivates the enzyme. Dephosphorylation upon light stimulation reactivates the enzyme.

It carries out the reaction pyruvate + phosphate + ATP = phosphoenolpyruvate + AMP + diphosphate + H(+). Activated by light-induced dephosphorylation. Inhibited by dark-induced phosphorylation. Both reactions are catalyzed by PDRP1. Functionally, catalyzes the reversible phosphorylation of pyruvate and phosphate. This chain is Pyruvate, phosphate dikinase (ppdK), found in Rhizobium meliloti (strain 1021) (Ensifer meliloti).